Consider the following 428-residue polypeptide: Enolase (428 aa).

Gln-163 contributes to the (2R)-2-phosphoglycerate binding site. Catalysis depends on Glu-205, which acts as the Proton donor. Mg(2+) is bound by residues Asp-242, Glu-285, and Asp-312. Residues Lys-337, Arg-366, Ser-367, and Lys-388 each coordinate (2R)-2-phosphoglycerate. The active-site Proton acceptor is the Lys-337.

It belongs to the enolase family. The cofactor is Mg(2+).

The protein resides in the cytoplasm. It is found in the secreted. It localises to the cell surface. It catalyses the reaction (2R)-2-phosphoglycerate = phosphoenolpyruvate + H2O. The protein operates within carbohydrate degradation; glycolysis; pyruvate from D-glyceraldehyde 3-phosphate: step 4/5. In terms of biological role, catalyzes the reversible conversion of 2-phosphoglycerate (2-PG) into phosphoenolpyruvate (PEP). It is essential for the degradation of carbohydrates via glycolysis. The sequence is that of Enolase from Neisseria meningitidis serogroup A / serotype 4A (strain DSM 15465 / Z2491).